A 76-amino-acid chain; its full sequence is Large ribosomal subunit protein bL31 (76 aa).

The protein belongs to the bacterial ribosomal protein bL31 family. Type A subfamily. Part of the 50S ribosomal subunit.

In terms of biological role, binds the 23S rRNA. The chain is Large ribosomal subunit protein bL31 from Methylocella silvestris (strain DSM 15510 / CIP 108128 / LMG 27833 / NCIMB 13906 / BL2).